We begin with the raw amino-acid sequence, 206 residues long: MTKRTSAKYKIDRRMGENIWGRPKSPVNRREYGPGQHGQRRKQKMSDFGLQLRAKQKLKGYYGDLTEKQFRRIYAEAERVKGDTGENLIGLLERRLDAVVYRAKFVPTVFAARQFVNHGHVLVNGERVNIPSYRVKEGDVIEVREKSRQMAALLEATQLPERDVPDYVDADHNKMKATFVRTPGLADVPYPVMMEPNLVIEYYAQN.

The interval 18–46 (NIWGRPKSPVNRREYGPGQHGQRRKQKMS) is disordered. The 61-residue stretch at 94 to 154 (RRLDAVVYRA…EKSRQMAALL (61 aa)) folds into the S4 RNA-binding domain.

It belongs to the universal ribosomal protein uS4 family. Part of the 30S ribosomal subunit. Contacts protein S5. The interaction surface between S4 and S5 is involved in control of translational fidelity.

Its function is as follows. One of the primary rRNA binding proteins, it binds directly to 16S rRNA where it nucleates assembly of the body of the 30S subunit. With S5 and S12 plays an important role in translational accuracy. This Dinoroseobacter shibae (strain DSM 16493 / NCIMB 14021 / DFL 12) protein is Small ribosomal subunit protein uS4.